A 156-amino-acid chain; its full sequence is Oxidized purine nucleoside triphosphate hydrolase (156 aa).

The Nudix hydrolase domain maps to alanine 3 to lysine 132. Threonine 8 serves as a coordination point for 2-oxo-dATP. Threonine 8 and lysine 23 together coordinate 8-oxo-dGMP. Threonine 8 and lysine 23 together coordinate 8-oxo-dGTP. N(6)-methyl-AMP contacts are provided by threonine 8 and lysine 23. 2 residues coordinate O(6)-methyl-dGMP: threonine 8 and lysine 23. Phenylalanine 27 is an 8-oxo-ATP binding site. 2-oxo-dATP-binding positions include asparagine 33 and phenylalanine 35–lysine 38. Residue asparagine 33 coordinates 8-oxo-dGMP. 8-oxo-dGTP-binding positions include asparagine 33 and phenylalanine 35–lysine 38. Asparagine 33 contacts O(6)-methyl-dGMP. 8-oxo-ATP contacts are provided by residues phenylalanine 35–lysine 38 and glutamate 52. Mg(2+) contacts are provided by glycine 36, glutamate 52, glutamate 55, glutamate 56, and glutamate 100. The Nudix box signature appears at glycine 37–glycine 58. Glutamate 56 is a binding site for 8-oxo-ATP. Tryptophan 117–aspartate 120 serves as a coordination point for 2-oxo-dATP. Tryptophan 117–aspartate 120 is a binding site for 8-oxo-dGMP. Tryptophan 117 to aspartate 120 contacts 8-oxo-dGTP. Tryptophan 117–aspartate 120 is a N(6)-methyl-AMP binding site. Tryptophan 117–aspartate 120 provides a ligand contact to O(6)-methyl-dGMP. Tryptophan 117–aspartate 120 contacts 8-oxo-ATP.

Belongs to the Nudix hydrolase family. In terms of assembly, monomer. The cofactor is Mg(2+). Post-translationally, the N-terminus is blocked. As to expression, widely expressed with highest expression in thymus, testis, embryo and proliferating blood lymphocytes.

It is found in the cytoplasm. The protein localises to the cytosol. The protein resides in the mitochondrion matrix. It localises to the nucleus. It catalyses the reaction 2-oxo-dATP + H2O = 2-oxo-dAMP + diphosphate + H(+). It carries out the reaction 2-oxo-ATP + H2O = 2-oxo-AMP + diphosphate + H(+). The catalysed reaction is 8-oxo-dGTP + H2O = 8-oxo-dGMP + diphosphate + H(+). The enzyme catalyses 8-oxo-dATP + H2O = 8-oxo-dAMP + diphosphate + H(+). It catalyses the reaction O(6)-methyl-dGTP + H2O = O(6)-methyl-dGMP + diphosphate + H(+). It carries out the reaction N(6)-methyl-dATP + H2O = N(6)-methyl-dAMP + diphosphate + H(+). The catalysed reaction is N(6)-methyl-ATP + H2O = N(6)-methyl-AMP + diphosphate + H(+). Inhibited by 2-oxo-dADP and 8-oxo-dGDP. Functionally, oxidized purine nucleoside triphosphate hydrolase which is a prominent sanitizer of the oxidized nucleotide pool. Catalyzes the hydrolysis of 2-oxo-dATP (2-hydroxy-dATP) into 2-oxo-dAMP. Also has a significant hydrolase activity toward 2-oxo-ATP, 8-oxo-dGTP and 8-oxo-dATP. Through the hydrolysis of oxidized purine nucleoside triphosphates, prevents their incorporation into DNA and the subsequent transversions A:T to C:G and G:C to T:A. Also catalyzes the hydrolysis of methylated purine nucleoside triphosphate preventing their integration into DNA. Through this antimutagenic activity protects cells from oxidative stress. The protein is Oxidized purine nucleoside triphosphate hydrolase (NUDT1) of Homo sapiens (Human).